A 461-amino-acid chain; its full sequence is Cytochrome c biogenesis protein CcsB (461 aa).

Transmembrane regions (helical) follow at residues 32–52, 91–111, and 178–198; these read LRLA…GTVI, TWWF…CTFT, and IGPI…IWGA.

This sequence belongs to the Ccs1/CcsB family. May interact with CcsA.

The protein resides in the cellular thylakoid membrane. Required during biogenesis of c-type cytochromes (cytochrome c6 and cytochrome f) at the step of heme attachment. The polypeptide is Cytochrome c biogenesis protein CcsB (Nostoc sp. (strain PCC 7120 / SAG 25.82 / UTEX 2576)).